We begin with the raw amino-acid sequence, 270 residues long: Diaminopimelate epimerase (270 aa).

N15, Q49, and N66 together coordinate substrate. The Proton donor role is filled by C75. Substrate is bound by residues 76–77 (GN), N155, N187, and 204–205 (ER). C213 functions as the Proton acceptor in the catalytic mechanism. Residue 214-215 (GS) coordinates substrate.

Belongs to the diaminopimelate epimerase family. In terms of assembly, homodimer.

The protein localises to the cytoplasm. The enzyme catalyses (2S,6S)-2,6-diaminopimelate = meso-2,6-diaminopimelate. It functions in the pathway amino-acid biosynthesis; L-lysine biosynthesis via DAP pathway; DL-2,6-diaminopimelate from LL-2,6-diaminopimelate: step 1/1. Catalyzes the stereoinversion of LL-2,6-diaminopimelate (L,L-DAP) to meso-diaminopimelate (meso-DAP), a precursor of L-lysine and an essential component of the bacterial peptidoglycan. This Rickettsia conorii (strain ATCC VR-613 / Malish 7) protein is Diaminopimelate epimerase.